The following is a 290-amino-acid chain: 33 kDa chaperonin (290 aa).

Intrachain disulfides connect C235–C237 and C268–C271.

The protein belongs to the HSP33 family. Post-translationally, under oxidizing conditions two disulfide bonds are formed involving the reactive cysteines. Under reducing conditions zinc is bound to the reactive cysteines and the protein is inactive.

Its subcellular location is the cytoplasm. In terms of biological role, redox regulated molecular chaperone. Protects both thermally unfolding and oxidatively damaged proteins from irreversible aggregation. Plays an important role in the bacterial defense system toward oxidative stress. The chain is 33 kDa chaperonin from Streptococcus pyogenes serotype M1.